The sequence spans 332 residues: Protein pelota homolog (332 aa).

It belongs to the eukaryotic release factor 1 family. Pelota subfamily. Monomer. A divalent metal cation is required as a cofactor.

Its subcellular location is the cytoplasm. In terms of biological role, may function in recognizing stalled ribosomes, interact with stem-loop structures in stalled mRNA molecules, and effect endonucleolytic cleavage of the mRNA. May play a role in the release non-functional ribosomes and degradation of damaged mRNAs. Has endoribonuclease activity. This Pyrobaculum calidifontis (strain DSM 21063 / JCM 11548 / VA1) protein is Protein pelota homolog.